The chain runs to 190 residues: Imidazoleglycerol-phosphate dehydratase (190 aa).

Belongs to the imidazoleglycerol-phosphate dehydratase family.

It is found in the cytoplasm. It catalyses the reaction D-erythro-1-(imidazol-4-yl)glycerol 3-phosphate = 3-(imidazol-4-yl)-2-oxopropyl phosphate + H2O. Its pathway is amino-acid biosynthesis; L-histidine biosynthesis; L-histidine from 5-phospho-alpha-D-ribose 1-diphosphate: step 6/9. The protein is Imidazoleglycerol-phosphate dehydratase of Methanococcus maripaludis (strain DSM 14266 / JCM 13030 / NBRC 101832 / S2 / LL).